The following is a 215-amino-acid chain: MKIFIDTANVEEIRKASKLGVLAGVTTNPSLIAKEGRDIKEVIEEICSIVDGSISAEVMALECDEMVREGRELAKIHKNIVIKIPMCEEGLKAVKVLASEGIRTNVTLIFSPLQALLAARAGASFVSPFLGRLDDIGNPGIEIVTQIAEMFALHGIDTEIISASVRNPMHVLDSAMAGSHIATIPYNVILQMVKHPLTDAGMKKFIEDYNKAFNK.

Lys-83 acts as the Schiff-base intermediate with substrate in catalysis.

Belongs to the transaldolase family. Type 3B subfamily.

Its subcellular location is the cytoplasm. The catalysed reaction is D-sedoheptulose 7-phosphate + D-glyceraldehyde 3-phosphate = D-erythrose 4-phosphate + beta-D-fructose 6-phosphate. Its pathway is carbohydrate degradation; pentose phosphate pathway; D-glyceraldehyde 3-phosphate and beta-D-fructose 6-phosphate from D-ribose 5-phosphate and D-xylulose 5-phosphate (non-oxidative stage): step 2/3. Transaldolase is important for the balance of metabolites in the pentose-phosphate pathway. This Clostridium perfringens (strain ATCC 13124 / DSM 756 / JCM 1290 / NCIMB 6125 / NCTC 8237 / Type A) protein is Probable transaldolase.